Reading from the N-terminus, the 816-residue chain is H(+)/Cl(-) exchange transporter 5 (816 aa).

The segment at 1 to 26 (MAMWQGAMDNRGFQQGSFSSFQNSSS) is disordered. Topologically, residues 1–124 (MAMWQGAMDN…WALIHSVSDA (124 aa)) are cytoplasmic. A compositionally biased stretch (low complexity) spans 12 to 25 (GFQQGSFSSFQNSS). 2 helical membrane passes run 125–162 (FSGW…ICTG) and 208–231 (VNYF…VKVF). A Selectivity filter part_1 motif is present at residues 237-241 (GSGIP). A chloride-binding site is contributed by Ser238. Positions 240 to 247 (IPEIKTIL) form an intramembrane region, helical. The next 2 helical transmembrane spans lie at 256–275 (LGKW…VSSG) and 281–300 (EGPL…HCFN). Positions 279–283 (GKEGP) match the Selectivity filter part_2 motif. 2 intramembrane regions (helical) span residues 312 to 324 (VLSA…VSVA) and 328 to 336 (PIGGVLFSL). 5 helical membrane-spanning segments follow: residues 348 to 366 (LWRS…RSIN), 389 to 415 (LVPF…AWCR), 422 to 442 (LGKY…ILAF), 498 to 518 (MWQL…TFGM), and 523 to 542 (GLFI…LGVG). A Selectivity filter part_3 motif is present at residues 523–527 (GLFIP). Phe525 is a binding site for chloride. Residues 570–584 (GLYAMVGAAACLGGV) constitute an intramembrane region (helical). The note=Loop between two helices intramembrane region spans 585–587 (TRM). An intramembrane region (helical) is located at residues 588–599 (TVSLVVIMFELT). The segment at residues 600-604 (GGLEY) is an intramembrane region (note=Loop between two helices). Residues 605-622 (IVPLMAAAMTSKWVADAL) form a helical membrane-spanning segment. Residues 623-816 (GREGIYDAHI…NQDPDSILFN (194 aa)) are Cytoplasmic-facing. A chloride-binding site is contributed by Tyr628. CBS domains lie at 656 to 720 (MKPR…ARKK) and 752 to 812 (ILDL…DPDS). Residues Thr666, 687–689 (YSG), and 794–797 (TKKD) each bind ATP.

It belongs to the chloride channel (TC 2.A.49) family. ClC-5/CLCN5 subfamily. Interacts with NEDD4 and NEDD4L. Ubiquitinated by NEDD4L in the presence of albumin; which promotes endocytosis and proteasomal degradation. Kidney. Moderately expressed in aortic vascular smooth muscle and endothelial cells, and at a slightly higher level in the coronary vascular smooth muscle.

The protein resides in the golgi apparatus membrane. Its subcellular location is the endosome membrane. It is found in the cell membrane. It catalyses the reaction 2 chloride(in) + H(+)(out) = 2 chloride(out) + H(+)(in). Functionally, proton-coupled chloride transporter. Functions as antiport system and exchanges chloride ions against protons. Important for normal acidification of the endosome lumen. May play an important role in renal tubular function. The CLC channel family contains both chloride channels and proton-coupled anion transporters that exchange chloride or another anion for protons. The absence of conserved gating glutamate residues is typical for family members that function as channels. This is H(+)/Cl(-) exchange transporter 5 from Homo sapiens (Human).